Reading from the N-terminus, the 1106-residue chain is Voltage-dependent calcium channel subunit alpha-2/delta-1 (1106 aa).

Positions 1–26 are cleaved as a signal peptide; sequence MAAGRPLAWTLTLWQAWLILIGPSSE. Over 27-1076 the chain is Extracellular; it reads EPFPSAVTIK…VLEDYTDCGG (1050 aa). N94 carries an N-linked (GlcNAc...) asparagine glycan. Phosphoserine is present on S121. Residues N138 and N186 are each glycosylated (N-linked (GlcNAc...) asparagine). The 178-residue stretch at 255–432 folds into the VWFA domain; sequence DMLILVDVSG…INTQEYLDVL (178 aa). 3 residues coordinate a divalent metal cation: D261, S263, and S265. An MIDAS-like motif motif is present at residues 261 to 265; sequence DVSGS. N-linked (GlcNAc...) asparagine glycans are attached at residues N326 and N350. C406 and C1062 are disulfide-bonded. The 92-residue stretch at 448-539 folds into the Cache domain; that stretch reads WTNVYLDALE…QPKPIGVGIP (92 aa). N-linked (GlcNAc...) asparagine glycosylation is found at N615, N784, and N891. The helical transmembrane segment at 1077–1097 threads the bilayer; it reads VSGLNPSLWSIIGIQFVLLWL. Residues 1098 to 1106 are Cytoplasmic-facing; it reads VSGSRHCLL.

It belongs to the calcium channel subunit alpha-2/delta family. Dimer formed of alpha-2-1 and delta-1 chains; disulfide-linked. Voltage-dependent calcium channels are multisubunit complexes, consisting of alpha-1 (CACNA1), alpha-2 (CACNA2D), beta (CACNB) and delta (CACNA2D) subunits in a 1:1:1:1 ratio. In terms of processing, proteolytically processed into subunits alpha-2-1 and delta-1 that are disulfide-linked. In terms of tissue distribution, skeletal muscle.

Its subcellular location is the membrane. It is found in the cell membrane. Functionally, the alpha-2/delta subunit of voltage-dependent calcium channels regulates calcium current density and activation/inactivation kinetics of the calcium channel. Plays an important role in excitation-contraction coupling. In Oryctolagus cuniculus (Rabbit), this protein is Voltage-dependent calcium channel subunit alpha-2/delta-1 (CACNA2D1).